Here is a 344-residue protein sequence, read N- to C-terminus: Dihydroorotase (344 aa).

Residues His-13 and His-15 each coordinate Zn(2+). Residues 15-17 (HVR) and Asn-41 contribute to the substrate site. 3 residues coordinate Zn(2+): Lys-99, His-136, and His-174. N6-carboxylysine is present on Lys-99. Position 136 (His-136) interacts with substrate. Residue Leu-219 coordinates substrate. Asp-247 contributes to the Zn(2+) binding site. Asp-247 is an active-site residue. Substrate-binding residues include His-251 and Ala-263.

It belongs to the metallo-dependent hydrolases superfamily. DHOase family. Class II DHOase subfamily. In terms of assembly, homodimer. Zn(2+) serves as cofactor.

The enzyme catalyses (S)-dihydroorotate + H2O = N-carbamoyl-L-aspartate + H(+). The protein operates within pyrimidine metabolism; UMP biosynthesis via de novo pathway; (S)-dihydroorotate from bicarbonate: step 3/3. Catalyzes the reversible cyclization of carbamoyl aspartate to dihydroorotate. The polypeptide is Dihydroorotase (Azoarcus sp. (strain BH72)).